A 338-amino-acid polypeptide reads, in one-letter code: Activator of 90 kDa heat shock protein ATPase homolog 1 (338 aa).

At Lys3 the chain carries N6-acetyllysine. Residue Lys182 forms a Glycyl lysine isopeptide (Lys-Gly) (interchain with G-Cter in SUMO1) linkage. The residue at position 193 (Ser193) is a Phosphoserine. Lys203 is covalently cross-linked (Glycyl lysine isopeptide (Lys-Gly) (interchain with G-Cter in SUMO2)). Lys212 is modified (N6-acetyllysine). Tyr223 carries the phosphotyrosine; by ABL modification. The residue at position 258 (Ser258) is a Phosphoserine.

It belongs to the AHA1 family. In terms of assembly, interacts with HSPCA/HSP90. Interacts (phosphorylated on Tyr-223) with HSP90AA1; the interaction activates HSP90AA1 ATPase activity. Interacts with HSP90AB1. Interacts with GCH1. Interacts with SRPK1. Interacts with FLCN. (Microbial infection) Interacts with vesicular stomatitis virus glycoprotein (VSV G) (via cytoplasmic tail). Post-translationally, phosphorylation at Tyr-223 enhances binding to chaperone HSP90AA1. In terms of tissue distribution, expressed in numerous tissues, including brain, heart, skeletal muscle and kidney and, at lower levels, liver and placenta.

It is found in the cytoplasm. The protein localises to the cytosol. It localises to the endoplasmic reticulum. Functionally, acts as a co-chaperone of HSP90AA1. Activates the ATPase activity of HSP90AA1 leading to increase in its chaperone activity. Competes with the inhibitory co-chaperone FNIP1 for binding to HSP90AA1, thereby providing a reciprocal regulatory mechanism for chaperoning of client proteins. Competes with the inhibitory co-chaperone TSC1 for binding to HSP90AA1, thereby providing a reciprocal regulatory mechanism for chaperoning of client proteins. The sequence is that of Activator of 90 kDa heat shock protein ATPase homolog 1 (AHSA1) from Homo sapiens (Human).